A 949-amino-acid chain; its full sequence is Piwi-like protein 2 (949 aa).

Positions 1–125 (MDPTRPPFRG…SLSTRVQQAS (125 aa)) are disordered. The segment covering 115 to 125 (PSLSTRVQQAS) has biased composition (polar residues). The PAZ domain occupies 366–478 (SVLDIMNILY…LLPELAFMTG (113 aa)). Residues 644–935 (LLVCLISGTR…LAFLSGQFLH (292 aa)) form the Piwi domain. Active-site residues include aspartate 721, glutamate 759, aspartate 791, and histidine 924.

It belongs to the argonaute family. Piwi subfamily. Component of the PET complex. Mg(2+) is required as a cofactor. Post-translationally, methylated on arginine residues; required for the interaction with Tudor domain-containing protein and subsequent localization to the meiotic nuage, also named P granule. As to expression, expressed in oocytes, testis and liver (at protein level).

It is found in the cytoplasm. Its subcellular location is the nucleus. Endoribonuclease that plays a central role during spermatogenesis by repressing transposable elements and preventing their mobilization, which is essential for the germline integrity. Plays an essential role in meiotic differentiation of spermatocytes, germ cell differentiation and in self-renewal of spermatogonial stem cells. Acts via the piRNA metabolic process, which mediates the repression of transposable elements during meiosis by forming complexes composed of piRNAs and Piwi proteins and govern the methylation and subsequent repression of transposons. During piRNA biosynthesis, plays a key role in the piRNA amplification loop, also named ping-pong amplification cycle, by acting as a 'slicer-competent' piRNA endoribonuclease that cleaves primary piRNAs, which are then loaded onto 'slicer-incompetent' piwil4. Piwil2 slicing produces a pre-miRNA intermediate, which is then processed in mature piRNAs, and as well as a 16 nucleotide by-product that is degraded. Required for piwil4/miwi2 nuclear localization and association with secondary piRNAs antisense. Represses circadian rhythms by promoting the stability and activity of core clock components BMAL1 and CLOCK. This is Piwi-like protein 2 (piwil2) from Xenopus tropicalis (Western clawed frog).